A 172-amino-acid chain; its full sequence is 3-hydroxydecanoyl-[acyl-carrier-protein] dehydratase (172 aa).

His71 is a catalytic residue.

Belongs to the thioester dehydratase family. FabA subfamily. Homodimer.

It is found in the cytoplasm. It carries out the reaction a (3R)-hydroxyacyl-[ACP] = a (2E)-enoyl-[ACP] + H2O. It catalyses the reaction (3R)-hydroxydecanoyl-[ACP] = (2E)-decenoyl-[ACP] + H2O. The enzyme catalyses (2E)-decenoyl-[ACP] = (3Z)-decenoyl-[ACP]. Its pathway is lipid metabolism; fatty acid biosynthesis. Necessary for the introduction of cis unsaturation into fatty acids. Catalyzes the dehydration of (3R)-3-hydroxydecanoyl-ACP to E-(2)-decenoyl-ACP and then its isomerization to Z-(3)-decenoyl-ACP. Can catalyze the dehydratase reaction for beta-hydroxyacyl-ACPs with saturated chain lengths up to 16:0, being most active on intermediate chain length. In Escherichia coli O6:K15:H31 (strain 536 / UPEC), this protein is 3-hydroxydecanoyl-[acyl-carrier-protein] dehydratase.